A 1019-amino-acid polypeptide reads, in one-letter code: Limulus clotting factor C (1019 aa).

An N-terminal signal peptide occupies residues 1 to 25; it reads MVLASFLVSGLVLGLLAQKMRPVQS. Positions 102–137 constitute an EGF-like domain; it reads YGTWCSGECQCKNGGICDQRTGACACRDRYEGVHCE. 17 disulfide bridges follow: C106–C118, C112–C125, C127–C136, C142–C182, C168–C195, C199–C241, C227–C254, C260–C308, C294–C321, C331–C350, C354–C374, C436–C447, C464–C564, C538–C556, C576–C621, C607–C634, and C720–C748. 3 consecutive Sushi domains span residues 140–197, 198–256, and 258–323; these read KGCP…KCIR, ECAM…QCKN, and VFCP…SCVK. The 97-residue stretch at 325–421 folds into the LCCL domain; that stretch reads ADREVDCDSK…EELKSLARSF (97 aa). The C-type lectin domain occupies 436 to 568; that stretch reads CPDGWFEVDE…PSSFACMMDL (133 aa). 2 N-linked (GlcNAc...) asparagine glycosylation sites follow: N523 and N534. Sushi domains follow at residues 574–636 and 689–750; these read AKCD…RCIK and PRSS…SCIP. Residues N624, N740, and N767 are each glycosylated (N-linked (GlcNAc...) asparagine). A Peptidase S1 domain is found at 763–1019; that stretch reads IWNGNSTEIG…VFLSWIRQFI (257 aa). A disulfide bond links C794 and C810. Catalysis depends on charge relay system residues H809 and D865. An N-linked (GlcNAc...) asparagine glycan is attached at N912. The cysteines at positions 932 and 951 are disulfide-linked. D960 is a substrate binding site. C962 and C996 are oxidised to a cystine. Residue S966 is the Charge relay system of the active site.

The protein belongs to the peptidase S1 family. In terms of assembly, heterodimer of a light chain and a heavy chain linked by a disulfide bond.

The protein localises to the secreted. It catalyses the reaction Selective cleavage of 103-Arg-|-Ser-104 and 124-Ile-|-Ile-125 bonds in Limulus clotting factor B to form activated factor B. Cleavage of -Pro-Arg-|-Xaa- bonds in synthetic substrates.. With respect to regulation, activated by Gram-negative bacterial lipopolysaccharides and chymotrypsin. Functionally, this enzyme is closely associated with an endotoxin-sensitive hemolymph coagulation system which may play important roles in both hemostasis and host defense mechanisms. Its active form catalyzes the activation of factor B. The polypeptide is Limulus clotting factor C (Carcinoscorpius rotundicauda (Mangrove horseshoe crab)).